The sequence spans 106 residues: MAARIRKGDRVVVIAGASKGREGEVLRVLPAENKAVVSGVAVAKRHTKARGMGEQGGIIQKEMPVHLSNIALIDPETKKPTRVGFRVLEDGRKVRVARKSDSVIDG.

This sequence belongs to the universal ribosomal protein uL24 family. In terms of assembly, part of the 50S ribosomal subunit.

Functionally, one of two assembly initiator proteins, it binds directly to the 5'-end of the 23S rRNA, where it nucleates assembly of the 50S subunit. In terms of biological role, one of the proteins that surrounds the polypeptide exit tunnel on the outside of the subunit. The sequence is that of Large ribosomal subunit protein uL24 from Acidiphilium cryptum (strain JF-5).